Reading from the N-terminus, the 547-residue chain is Phosphoethanolamine transferase EptA (547 aa).

At Met1–Pro9 the chain is on the cytoplasmic side. The helical transmembrane segment at Val10–Ile30 threads the bilayer. Residues Ala31 to Asn47 lie on the Periplasmic side of the membrane. A helical membrane pass occupies residues Val48–Leu68. The Cytoplasmic segment spans residues Ala69 to Ala79. The chain crosses the membrane as a helical span at residues Cys80–Ile100. Over Asp101 to Gln123 the chain is Periplasmic. A helical membrane pass occupies residues Met124–Ile144. At Arg145–Gly154 the chain is on the cytoplasmic side. Residues Leu155–Phe175 form a helical membrane-spanning segment. Residues Tyr176–Glu547 lie on the Periplasmic side of the membrane.

Belongs to the phosphoethanolamine transferase family. EptA subfamily.

It localises to the cell inner membrane. It functions in the pathway bacterial outer membrane biogenesis; LPS lipid A biosynthesis. Catalyzes the addition of a phosphoethanolamine moiety to the lipid A. The phosphoethanolamine modification is required for resistance to polymyxin. The chain is Phosphoethanolamine transferase EptA (eptA) from Salmonella typhimurium (strain LT2 / SGSC1412 / ATCC 700720).